A 409-amino-acid polypeptide reads, in one-letter code: Inactive serine protease 35 (409 aa).

Residues 1–20 form the signal peptide; the sequence is MENTLLWLVILIPGWALSDG. The N-linked (GlcNAc...) asparagine glycan is linked to asparagine 90. Residues 124–404 enclose the Peptidase S1 domain; it reads VYGTDSRFSI…ICLWIHGNAA (281 aa). An intrachain disulfide couples cysteine 154 to cysteine 170. A compositionally biased stretch (basic residues) spans 188 to 207; it reads VLKMRNKGGRKKRRGSKRSR. Positions 188 to 247 are disordered; sequence VLKMRNKGGRKKRRGSKRSRREAESAGQSQAHLRESTTQRPGKKSRRGPRVTQGRPSFQW.

The protein belongs to the peptidase S1 family. In terms of tissue distribution, in ovary, it localizes to the theca cells of pre-antral follicles, the theca and granulosa cells of pre-ovulatory and ovulatory follicles, as well as to the developing corpus luteum.

It is found in the secreted. This Mus musculus (Mouse) protein is Inactive serine protease 35 (Prss35).